The chain runs to 59 residues: Large ribosomal subunit protein bL32 (59 aa).

Residues 1-59 are disordered; it reads MAVQQNKKSPSKRGMHRSHDHLSAAPLAVEPTTGETHLRHHVSPNGYYRGRKVIKTKND. 2 stretches are compositionally biased toward basic residues: residues 9-19 and 49-59; these read SPSKRGMHRSH and RGRKVIKTKND.

Belongs to the bacterial ribosomal protein bL32 family.

The chain is Large ribosomal subunit protein bL32 from Cupriavidus necator (strain ATCC 17699 / DSM 428 / KCTC 22496 / NCIMB 10442 / H16 / Stanier 337) (Ralstonia eutropha).